Here is a 1168-residue protein sequence, read N- to C-terminus: Carboxylic acid reductase (1168 aa).

AMP-binding positions include H290, S385, 407-408 (EG), T412, D485, 497-500 (YLDR), K506, and K606. In terms of domain architecture, Carrier spans 645–720 (APVLPTLCRA…ALADHIEAAR (76 aa)). S679 carries the O-(pantetheine 4'-phosphoryl)serine modification. Residues 777–780 (TGFL), R804, R814, 844–845 (DK), 870–872 (PAA), S910, Y946, and K950 each bind NADP(+).

It belongs to the ATP-dependent AMP-binding enzyme family. Carboxylic acid reductase subfamily. It depends on pantetheine 4'-phosphate as a cofactor.

The enzyme catalyses a carboxylate + ATP + NADPH + H(+) = an aldehyde + AMP + diphosphate + NADP(+). It catalyses the reaction a medium-chain fatty acid + ATP + H(+) = a medium-chain fatty acyl-AMP + diphosphate. It carries out the reaction a long-chain fatty acid + ATP + H(+) = a long-chain fatty acyl-AMP + diphosphate. The catalysed reaction is dodecanoate + ATP + H(+) = dodecanoyl-AMP + diphosphate. The enzyme catalyses hexadecanoate + ATP + H(+) = hexadecanoyl-AMP + diphosphate. Functionally, catalyzes the ATP- and NADPH-dependent reduction of carboxylic acids to the corresponding aldehydes. In vitro, also catalyzes the activation of medium/long-chain fatty acids as acyl-adenylates (acyl-AMP). This chain is Carboxylic acid reductase, found in Mycobacterium tuberculosis (strain ATCC 25618 / H37Rv).